We begin with the raw amino-acid sequence, 467 residues long: ATP synthase subunit beta, chloroplastic (467 aa).

149-156 (GGAGVGKT) provides a ligand contact to ATP.

Belongs to the ATPase alpha/beta chains family. As to quaternary structure, F-type ATPases have 2 components, CF(1) - the catalytic core - and CF(0) - the membrane proton channel. CF(1) has five subunits: alpha(3), beta(3), gamma(1), delta(1), epsilon(1). CF(0) has four main subunits: a(1), b(1), b'(1) and c(9-12).

The protein localises to the plastid. Its subcellular location is the chloroplast thylakoid membrane. It catalyses the reaction ATP + H2O + 4 H(+)(in) = ADP + phosphate + 5 H(+)(out). In terms of biological role, produces ATP from ADP in the presence of a proton gradient across the membrane. The catalytic sites are hosted primarily by the beta subunits. This chain is ATP synthase subunit beta, chloroplastic, found in Cyanidioschyzon merolae (strain NIES-3377 / 10D) (Unicellular red alga).